The primary structure comprises 257 residues: DNA repair protein RecO (257 aa).

Belongs to the RecO family.

Functionally, involved in DNA repair and RecF pathway recombination. This Streptococcus thermophilus (strain ATCC BAA-491 / LMD-9) protein is DNA repair protein RecO.